The primary structure comprises 1549 residues: Zinc finger MYM-type protein 4 (1549 aa).

A2 is modified (N-acetylalanine). Positions 83 to 108 (VVSSDNEDEQDCSSKDNLVSSVHTDG) are disordered. The span at 97–106 (KDNLVSSVHT) shows a compositional bias: polar residues. At T106 the chain carries Phosphothreonine. S109 and S121 each carry phosphoserine. Glycyl lysine isopeptide (Lys-Gly) (interchain with G-Cter in SUMO2) cross-links involve residues K139 and K148. S161 is subject to Phosphoserine. Residue K195 forms a Glycyl lysine isopeptide (Lys-Gly) (interchain with G-Cter in SUMO2) linkage. S197 bears the Phosphoserine mark. Glycyl lysine isopeptide (Lys-Gly) (interchain with G-Cter in SUMO2) cross-links involve residues K201 and K232. S242 is modified (phosphoserine). K250 participates in a covalent cross-link: Glycyl lysine isopeptide (Lys-Gly) (interchain with G-Cter in SUMO1); alternate. Residue K250 forms a Glycyl lysine isopeptide (Lys-Gly) (interchain with G-Cter in SUMO2); alternate linkage. Residues 267 to 291 (GLLDRVKDEPDNAQEYSHGQQQKTQ) form a disordered region. Glycyl lysine isopeptide (Lys-Gly) (interchain with G-Cter in SUMO2) cross-links involve residues K273, K289, K327, K400, K428, and K430. The segment covering 280–290 (QEYSHGQQQKT) has biased composition (polar residues). 9 MYM-type zinc fingers span residues 362–402 (QLFC…PKDV), 414–457 (KDFC…RHEV), 464–499 (HKLCSDACFSKFRSANNLTMNCCENCGGYCYSGSGQ), 510–544 (KKFCSSMCVTSYKQKSAKITPCALCKSLRSSAEMI), 554–592 (ELFCSVNCLSAYRVKMVTSAGVQVQCNSCKTSAIPQYHL), 600–631 (RNFCSYSCVVAFQNLFNKPTGMNSSVVPLSQG), 708–742 (FQFCGKNCCDEYKKINNVMAMCEYCKIEKIIKETV), 749–788 (KSFCSEGCKLLYKHDLGKRWGSHCKMCSYCLQTSPKLIQN), and 795–829 (EDFCCEECMSKYTVLFYQMAKCDGCKRQGKLSESL). Glycyl lysine isopeptide (Lys-Gly) (interchain with G-Cter in SUMO2) cross-links involve residues K1035 and K1062. 2 positions are modified to phosphoserine: S1065 and S1072. Glycyl lysine isopeptide (Lys-Gly) (interchain with G-Cter in SUMO2) cross-links involve residues K1081 and K1128. The tract at residues 1124–1185 (DSELKPFSKG…RRGRKKSVVP (62 aa)) is disordered. A compositionally biased stretch (basic and acidic residues) spans 1125–1135 (SELKPFSKGET). Residues 1161–1182 (SRTRRRHRDGFPQPRRRGRKKS) are compositionally biased toward basic residues. Phosphoserine occurs at positions 1182 and 1257. Residue K1432 forms a Glycyl lysine isopeptide (Lys-Gly) (interchain with G-Cter in SUMO2) linkage. 3 positions are modified to phosphoserine: S1540, S1543, and S1548.

Plays a role in the regulation of cell morphology and cytoskeletal organization. This is Zinc finger MYM-type protein 4 (Zmym4) from Mus musculus (Mouse).